The sequence spans 390 residues: Heat stress transcription factor B-2b (390 aa).

The disordered stretch occupies residues 165–212 (TRDGSPVLSGEEQVISSSSSPEPPLVLPQAPSGSGSGGVASGDVGDEN). Residues 206–237 (GDVGDENERLRRENAQLARELSQMRKLCNNIL) are a coiled coil. The hydrophobic repeat HR-A/B stretch occupies residues 215–244 (LRRENAQLARELSQMRKLCNNILLLMSKYA). Positions 318–322 (RKRMR) match the Nuclear localization signal motif. Positions 322–363 (RHDGGGDDDHAATVKAEPMDGRPHGKDEQSAETQAWPIYRPR) are disordered. Residues 323–350 (HDGGGDDDHAATVKAEPMDGRPHGKDEQ) show a composition bias toward basic and acidic residues.

The protein belongs to the HSF family. Class B subfamily. In terms of assembly, homotrimer. In terms of processing, exhibits temperature-dependent phosphorylation.

Its subcellular location is the nucleus. Functionally, transcriptional regulator that specifically binds DNA of heat shock promoter elements (HSE). In Oryza sativa subsp. japonica (Rice), this protein is Heat stress transcription factor B-2b (HSFB2B).